Consider the following 237-residue polypeptide: MARSMTSLVAVVPAAGVGSRMKADRPKQYLQIHGKTILEHTIERLLSHPAITQVVVAVSEDDPYYSELAIAQHPDIVRVAGGKERADSVLSALRFLSLQQQKADWVLVHDAARPCVAHQDIDALIERCSSHETGGILATPVRDTMKRANAQQMIDHTVDRNALWHALTPQMFKAEVLTDALSDALAQGVAITDEASALEWRGELPALVQGCSSNIKVTQPEDLALAEFYLSREKDRK.

This sequence belongs to the IspD/TarI cytidylyltransferase family. IspD subfamily.

It carries out the reaction 2-C-methyl-D-erythritol 4-phosphate + CTP + H(+) = 4-CDP-2-C-methyl-D-erythritol + diphosphate. It functions in the pathway isoprenoid biosynthesis; isopentenyl diphosphate biosynthesis via DXP pathway; isopentenyl diphosphate from 1-deoxy-D-xylulose 5-phosphate: step 2/6. Its function is as follows. Catalyzes the formation of 4-diphosphocytidyl-2-C-methyl-D-erythritol from CTP and 2-C-methyl-D-erythritol 4-phosphate (MEP). The sequence is that of 2-C-methyl-D-erythritol 4-phosphate cytidylyltransferase from Vibrio vulnificus (strain CMCP6).